Here is a 465-residue protein sequence, read N- to C-terminus: UPF0422 protein CBU_0937 (465 aa).

A signal peptide spans Met-1 to Ala-23. Positions Thr-28–Ala-60 form a coiled coil.

Belongs to the UPF0422 family.

The sequence is that of UPF0422 protein CBU_0937 from Coxiella burnetii (strain RSA 493 / Nine Mile phase I).